Here is a 681-residue protein sequence, read N- to C-terminus: U3 small nucleolar ribonucleoprotein protein MPP10 (681 aa).

Ser-61, Ser-120, and Ser-140 each carry phosphoserine. Residues 109–139 (ECEDEECEEDASEVEADNQENLETDLDEEQL) adopt a coiled-coil conformation. Positions 111–144 (EDEECEEDASEVEADNQENLETDLDEEQLSDEGG) are enriched in acidic residues. Disordered regions lie at residues 111–202 (EDEE…SVVD), 215–256 (LEKV…GRQK), and 268–365 (YKDF…EKRQ). The span at 145-163 (DVPKGRDRAKSSRKSDPRK) shows a compositional bias: basic and acidic residues. Phosphoserine occurs at positions 164, 168, and 172. The segment covering 215–227 (LEKVEKEEEKRPD) has biased composition (basic and acidic residues). 2 stretches are compositionally biased toward acidic residues: residues 228–248 (GEEE…DESE) and 273–322 (DPVE…EDEN). Phosphoserine occurs at positions 244, 247, 277, and 346. Residues 349–383 (AVKQESDEVKSSFEKRQEKMNEKIASLEKELLDKK) adopt a coiled-coil conformation. A Glycyl lysine isopeptide (Lys-Gly) (interchain with G-Cter in SUMO2) cross-link involves residue Lys-351. Over residues 352 to 365 (QESDEVKSSFEKRQ) the composition is skewed to basic and acidic residues. Residues Lys-383 and Lys-395 each participate in a glycyl lysine isopeptide (Lys-Gly) (interchain with G-Cter in SUMO2) cross-link. Residues 471-491 (AEIYEQEYLKLNQQKTEEEDN) adopt a coiled-coil conformation. Residue Lys-556 forms a Glycyl lysine isopeptide (Lys-Gly) (interchain with G-Cter in SUMO2) linkage. Over residues 560-576 (KAGDLKTAAEKTATDKK) the composition is skewed to basic and acidic residues. The segment at 560 to 644 (KAGDLKTAAE…RKDKPLKSSQ (85 aa)) is disordered. Residues 575–604 (KKRERRKKKYQKRLKIKEKEKRKKLLEKNN) adopt a coiled-coil conformation. The segment covering 577 to 599 (RERRKKKYQKRLKIKEKEKRKKL) has biased composition (basic residues). Lys-609 carries the post-translational modification N6-acetyllysine. Over residues 630–640 (LLKDERKDKPL) the composition is skewed to basic and acidic residues. Glycyl lysine isopeptide (Lys-Gly) (interchain with G-Cter in SUMO2) cross-links involve residues Lys-632 and Lys-649. Positions 657–681 (QINDAKQPEKIKKKKQDISVHKLKL) are disordered. Positions 662–681 (KQPEKIKKKKQDISVHKLKL) are enriched in basic and acidic residues.

Belongs to the MPP10 family. Part of the small subunit (SSU) processome, composed of more than 70 proteins and the RNA chaperone small nucleolar RNA (snoRNA) U3. Component of a heterotrimeric complex containing IMP3, IMP4 and MPHOSPH10. Interacts with IMP3 and IMP4. Phosphorylated in M (mitotic) phase.

The protein resides in the nucleus. It localises to the nucleolus. Its subcellular location is the chromosome. In terms of biological role, component of the 60-80S U3 small nucleolar ribonucleoprotein (U3 snoRNP). Required for the early cleavages during pre-18S ribosomal RNA processing. Part of the small subunit (SSU) processome, first precursor of the small eukaryotic ribosomal subunit. During the assembly of the SSU processome in the nucleolus, many ribosome biogenesis factors, an RNA chaperone and ribosomal proteins associate with the nascent pre-rRNA and work in concert to generate RNA folding, modifications, rearrangements and cleavage as well as targeted degradation of pre-ribosomal RNA by the RNA exosome. This Mus musculus (Mouse) protein is U3 small nucleolar ribonucleoprotein protein MPP10 (Mphosph10).